A 243-amino-acid chain; its full sequence is Ubiquinone/menaquinone biosynthesis C-methyltransferase UbiE (243 aa).

S-adenosyl-L-methionine-binding positions include Thr69, Asp90, and 116–117 (DA).

The protein belongs to the class I-like SAM-binding methyltransferase superfamily. MenG/UbiE family.

It carries out the reaction a 2-demethylmenaquinol + S-adenosyl-L-methionine = a menaquinol + S-adenosyl-L-homocysteine + H(+). The catalysed reaction is a 2-methoxy-6-(all-trans-polyprenyl)benzene-1,4-diol + S-adenosyl-L-methionine = a 5-methoxy-2-methyl-3-(all-trans-polyprenyl)benzene-1,4-diol + S-adenosyl-L-homocysteine + H(+). Its pathway is quinol/quinone metabolism; menaquinone biosynthesis; menaquinol from 1,4-dihydroxy-2-naphthoate: step 2/2. It participates in cofactor biosynthesis; ubiquinone biosynthesis. Functionally, methyltransferase required for the conversion of demethylmenaquinol (DMKH2) to menaquinol (MKH2) and the conversion of 2-polyprenyl-6-methoxy-1,4-benzoquinol (DDMQH2) to 2-polyprenyl-3-methyl-6-methoxy-1,4-benzoquinol (DMQH2). The sequence is that of Ubiquinone/menaquinone biosynthesis C-methyltransferase UbiE from Paraburkholderia xenovorans (strain LB400).